The primary structure comprises 506 residues: Exopolysaccharide phosphotransferase NFA_48680 (506 aa).

The disordered stretch occupies residues 484–506 (PAPWERVSAPSRRPLPESTAGAA).

Belongs to the stealth family.

This is Exopolysaccharide phosphotransferase NFA_48680 from Nocardia farcinica (strain IFM 10152).